The following is a 519-amino-acid chain: Putative lipase ATG15 (519 aa).

Residues 1 to 5 (MYIPG) are Cytoplasmic-facing. The chain crosses the membrane as a helical; Signal-anchor for type II membrane protein span at residues 6–26 (PLRLSSYLLPFLSSPSPPAQS). Residues 27 to 519 (SPDTRTISFK…CYKWEFGEWN (493 aa)) are Lumenal-facing. 6 N-linked (GlcNAc...) asparagine glycosylation sites follow: Asn48, Asn133, Asn196, Asn220, Asn302, and Asn309. Ser318 functions as the Charge relay system in the catalytic mechanism. Asn361 carries N-linked (GlcNAc...) asparagine glycosylation. The disordered stretch occupies residues 481–502 (RRGPKRQPGGEDPKHGGVPKPV).

It belongs to the AB hydrolase superfamily. Lipase family. In terms of assembly, binds to both phosphatidylinositol (PI) and phosphatidylinositol 3,5-bisphosphate (PIP2).

It localises to the endosome. The protein localises to the multivesicular body membrane. The protein resides in the prevacuolar compartment membrane. The catalysed reaction is a triacylglycerol + H2O = a diacylglycerol + a fatty acid + H(+). In terms of biological role, lipase which is essential for lysis of subvacuolar cytoplasm to vacuole targeted bodies and intravacuolar autophagic bodies. Involved in the lysis of intravacuolar multivesicular body (MVB) vesicles. The intravacuolar membrane disintegration by ATG15 is critical to life span extension. The protein is Putative lipase ATG15 (ATG15) of Cryptococcus neoformans var. neoformans serotype D (strain B-3501A) (Filobasidiella neoformans).